We begin with the raw amino-acid sequence, 278 residues long: Proline-rich 28 kDa antigen homolog (278 aa).

An N-terminal signal peptide occupies residues 1–28 (MIQSTQTWRVLAGGLAATAMGVTVFAGG).

This sequence to M.tuberculosis Rv0040c.

This Mycobacterium leprae (strain TN) protein is Proline-rich 28 kDa antigen homolog.